Reading from the N-terminus, the 120-residue chain is MAFRMSRDHADFVAHGGTEWDDGAFVNVKKIKIFHDWAGITLVQFDYIDGTGAIVSGLDHGTEPFQFDREHGRVPVEGARAEFWLRDDEYITIVTAFGGYCVRKIEFITNKRTFDFGGFN.

One can recognise a Jacalin-type lectin domain in the interval 6–120 (SRDHADFVAH…KRTFDFGGFN (115 aa)).

It belongs to the jacalin lectin family.

The protein is Jacalin-related lectin 39 (JAL39) of Arabidopsis thaliana (Mouse-ear cress).